The following is a 471-amino-acid chain: Protein translocase subunit SecF (471 aa).

Residues 1-29 (MVSRAKVGAETTKGIDEPDRNDNTDDNGA) form a disordered region. Residues 13-23 (KGIDEPDRNDN) are compositionally biased toward basic and acidic residues. 6 helical membrane-spanning segments follow: residues 88–108 (GGVIVAVAVLSIIVRGFTFGI), 211–231 (ITKKVVIALVVFLVLVGLYIT), 242–262 (ALTTMCFDLTVTAGVYSLVGF), 267–287 (ATVIGLLTILGFSLYDTVIVF), 325–345 (LISVLPVLALMVVAVWLLGVG), and 355–375 (LVGIIVGTYSSIFFATPLLVT). The disordered stretch occupies residues 393-471 (RRTLGSQVGK…TGKRNNVGRR (79 aa)). Positions 415–431 (KPQNQAESCADASSQEG) are enriched in polar residues. A compositionally biased stretch (low complexity) spans 448-460 (PGVRPVRPTGTRR). The span at 461–471 (PTGKRNNVGRR) shows a compositional bias: basic residues.

The protein belongs to the SecD/SecF family. SecF subfamily. As to quaternary structure, forms a complex with SecD. Part of the essential Sec protein translocation apparatus which comprises SecA, SecYEG and auxiliary proteins SecDF. Other proteins may also be involved.

Its subcellular location is the cell membrane. In terms of biological role, part of the Sec protein translocase complex. Interacts with the SecYEG preprotein conducting channel. SecDF uses the proton motive force (PMF) to complete protein translocation after the ATP-dependent function of SecA. In Mycobacterium leprae (strain TN), this protein is Protein translocase subunit SecF.